Reading from the N-terminus, the 199-residue chain is Nucleoid occlusion factor SlmA (199 aa).

The HTH tetR-type domain occupies 10 to 71; sequence RNRREEILQA…SLIEFIEDSL (62 aa). The H-T-H motif DNA-binding region spans 34–53; sequence TTAKLAANVGVSEAALYRHF. Residues 120 to 140 are a coiled coil; that stretch reads NRLQGRINQLFERIEVQIRQV.

The protein belongs to the nucleoid occlusion factor SlmA family. In terms of assembly, homodimer. Interacts with FtsZ.

The protein resides in the cytoplasm. Its subcellular location is the nucleoid. Functionally, required for nucleoid occlusion (NO) phenomenon, which prevents Z-ring formation and cell division over the nucleoid. Acts as a DNA-associated cell division inhibitor that binds simultaneously chromosomal DNA and FtsZ, and disrupts the assembly of FtsZ polymers. SlmA-DNA-binding sequences (SBS) are dispersed on non-Ter regions of the chromosome, preventing FtsZ polymerization at these regions. The protein is Nucleoid occlusion factor SlmA of Photorhabdus laumondii subsp. laumondii (strain DSM 15139 / CIP 105565 / TT01) (Photorhabdus luminescens subsp. laumondii).